The sequence spans 473 residues: Lactate utilization protein B 2 (473 aa).

4Fe-4S ferredoxin-type domains follow at residues 302-332 (GSEF…GHSY) and 351-380 (YDDY…LHDL). The [4Fe-4S] cluster site is built by cysteine 311, cysteine 314, cysteine 317, cysteine 321, cysteine 364, cysteine 367, and cysteine 371.

The protein belongs to the LutB/YkgF family.

Functionally, is involved in L-lactate degradation and allows cells to grow with lactate as the sole carbon source. Has probably a role as an electron transporter during oxidation of L-lactate. The chain is Lactate utilization protein B 2 from Bacillus mycoides (strain KBAB4) (Bacillus weihenstephanensis).